Reading from the N-terminus, the 293-residue chain is Acetyl-coenzyme A carboxylase carboxyl transferase subunit beta (293 aa).

Residues 29–293 (LWVKCSECSQ…GVNELVEANI (265 aa)) enclose the CoA carboxyltransferase N-terminal domain. Positions 33, 36, 52, and 55 each coordinate Zn(2+). A C4-type zinc finger spans residues 33–55 (CSECSQVAYRKDLISNFNVCSNC).

It belongs to the AccD/PCCB family. In terms of assembly, acetyl-CoA carboxylase is a heterohexamer composed of biotin carboxyl carrier protein (AccB), biotin carboxylase (AccC) and two subunits each of ACCase subunit alpha (AccA) and ACCase subunit beta (AccD). Requires Zn(2+) as cofactor.

The protein resides in the cytoplasm. It catalyses the reaction N(6)-carboxybiotinyl-L-lysyl-[protein] + acetyl-CoA = N(6)-biotinyl-L-lysyl-[protein] + malonyl-CoA. It participates in lipid metabolism; malonyl-CoA biosynthesis; malonyl-CoA from acetyl-CoA: step 1/1. Functionally, component of the acetyl coenzyme A carboxylase (ACC) complex. Biotin carboxylase (BC) catalyzes the carboxylation of biotin on its carrier protein (BCCP) and then the CO(2) group is transferred by the transcarboxylase to acetyl-CoA to form malonyl-CoA. This is Acetyl-coenzyme A carboxylase carboxyl transferase subunit beta from Prochlorococcus marinus (strain MIT 9215).